We begin with the raw amino-acid sequence, 126 residues long: UPF0538 protein C2orf76 homolog (126 aa).

This sequence belongs to the UPF0538 family.

In Pongo abelii (Sumatran orangutan), this protein is UPF0538 protein C2orf76 homolog.